We begin with the raw amino-acid sequence, 142 residues long: Large ribosomal subunit protein uL11 (142 aa).

This sequence belongs to the universal ribosomal protein uL11 family. Part of the ribosomal stalk of the 50S ribosomal subunit. Interacts with L10 and the large rRNA to form the base of the stalk. L10 forms an elongated spine to which L12 dimers bind in a sequential fashion forming a multimeric L10(L12)X complex. In terms of processing, one or more lysine residues are methylated.

Functionally, forms part of the ribosomal stalk which helps the ribosome interact with GTP-bound translation factors. In Mycoplasma mycoides subsp. mycoides SC (strain CCUG 32753 / NCTC 10114 / PG1), this protein is Large ribosomal subunit protein uL11.